The sequence spans 110 residues: Insulin (110 aa).

The N-terminal stretch at 1–24 is a signal peptide; it reads MALWMRLLPLLALLALWGPDPVPA. 3 disulfide bridges follow: cysteine 31-cysteine 96, cysteine 43-cysteine 109, and cysteine 95-cysteine 100. The propeptide at 57 to 87 is c peptide; it reads EAEDPQVGQVELGGGPGAGSLQPLALEGSLQ.

This sequence belongs to the insulin family. As to quaternary structure, heterodimer of a B chain and an A chain linked by two disulfide bonds.

It localises to the secreted. In terms of biological role, insulin decreases blood glucose concentration. It increases cell permeability to monosaccharides, amino acids and fatty acids. It accelerates glycolysis, the pentose phosphate cycle, and glycogen synthesis in liver. The protein is Insulin (INS) of Chlorocebus aethiops (Green monkey).